Consider the following 312-residue polypeptide: Aspartate carbamoyltransferase catalytic subunit (312 aa).

Residues Arg55 and Thr56 each coordinate carbamoyl phosphate. Lys83 contacts L-aspartate. Residues Arg105, His138, and Gln141 each contribute to the carbamoyl phosphate site. 2 residues coordinate L-aspartate: Arg171 and Arg225. Positions 266 and 267 each coordinate carbamoyl phosphate.

It belongs to the aspartate/ornithine carbamoyltransferase superfamily. ATCase family. In terms of assembly, heterododecamer (2C3:3R2) of six catalytic PyrB chains organized as two trimers (C3), and six regulatory PyrI chains organized as three dimers (R2).

The catalysed reaction is carbamoyl phosphate + L-aspartate = N-carbamoyl-L-aspartate + phosphate + H(+). Its pathway is pyrimidine metabolism; UMP biosynthesis via de novo pathway; (S)-dihydroorotate from bicarbonate: step 2/3. Catalyzes the condensation of carbamoyl phosphate and aspartate to form carbamoyl aspartate and inorganic phosphate, the committed step in the de novo pyrimidine nucleotide biosynthesis pathway. In Corynebacterium efficiens (strain DSM 44549 / YS-314 / AJ 12310 / JCM 11189 / NBRC 100395), this protein is Aspartate carbamoyltransferase catalytic subunit.